Reading from the N-terminus, the 254-residue chain is Small ribosomal subunit protein uS2 (254 aa).

This sequence belongs to the universal ribosomal protein uS2 family.

This Legionella pneumophila (strain Lens) protein is Small ribosomal subunit protein uS2.